Here is a 105-residue protein sequence, read N- to C-terminus: Malonate decarboxylase acyl carrier protein (105 aa).

Ser28 carries the O-(phosphoribosyl dephospho-coenzyme A)serine modification.

Belongs to the MdcC family. In terms of processing, covalently binds the prosthetic group of malonate decarboxylase.

It localises to the cytoplasm. Its function is as follows. Subunit of malonate decarboxylase, it is an acyl carrier protein to which acetyl and malonyl thioester residues are bound via a 2'-(5''-phosphoribosyl)-3'-dephospho-CoA prosthetic group and turn over during the catalytic mechanism. This Xanthomonas axonopodis pv. citri (strain 306) protein is Malonate decarboxylase acyl carrier protein.